Reading from the N-terminus, the 106-residue chain is uncharacterized protein (106 aa).

This is an uncharacterized protein from Enterobacteria phage T4 (Bacteriophage T4).